An 849-amino-acid chain; its full sequence is DNA mismatch repair protein MutS (849 aa).

665–672 (GPNMAGKS) provides a ligand contact to ATP.

It belongs to the DNA mismatch repair MutS family.

This protein is involved in the repair of mismatches in DNA. It is possible that it carries out the mismatch recognition step. This protein has a weak ATPase activity. This is DNA mismatch repair protein MutS from Wolbachia pipientis wMel.